The sequence spans 122 residues: Large ribosomal subunit protein uL14 (122 aa).

Belongs to the universal ribosomal protein uL14 family. As to quaternary structure, part of the 50S ribosomal subunit. Forms a cluster with proteins L3 and L19. In the 70S ribosome, L14 and L19 interact and together make contacts with the 16S rRNA in bridges B5 and B8.

Functionally, binds to 23S rRNA. Forms part of two intersubunit bridges in the 70S ribosome. This Finegoldia magna (strain ATCC 29328 / DSM 20472 / WAL 2508) (Peptostreptococcus magnus) protein is Large ribosomal subunit protein uL14.